Consider the following 1582-residue polypeptide: ATP-binding cassette sub-family C member 8 (1582 aa).

The Extracellular portion of the chain corresponds to 1–30; sequence MPLAFCGTENHSAAYRVDQGVLNNGCFVDA. Cysteine 6 and cysteine 26 are disulfide-bonded. Asparagine 10 carries an N-linked (GlcNAc...) asparagine glycan. A helical membrane pass occupies residues 31 to 47; that stretch reads LNVVPHVFLLFITFPIL. Residues 48–72 lie on the Cytoplasmic side of the membrane; that stretch reads FIGWGSQSSKVHIHHSTWLHFPGHN. Residues 73 to 89 traverse the membrane as a helical segment; the sequence is LRWILTFILLFVLVCEI. Residues 90–106 lie on the Extracellular side of the membrane; it reads AEGILSDGVTESRHLHL. A helical membrane pass occupies residues 107 to 123; the sequence is YMPAGMAFMAAITSVVY. Residues 124 to 136 lie on the Cytoplasmic side of the membrane; the sequence is YHNIETSNFPKLL. A helical membrane pass occupies residues 137–153; sequence IALLIYWTLAFITKTIK. The Extracellular segment spans residues 154–169; it reads FVKFYDHAIGFSQLRF. A helical transmembrane segment spans residues 170-186; sequence CLTGLLVILYGMLLLVE. At 187 to 303 the chain is on the cytoplasmic side; that stretch reads VNVIRVRRYI…AFGRRLILSS (117 aa). The region spanning 299-602 is the ABC transmembrane type-1 1 domain; sequence LILSSTFRIL…LSSVVRSTVK (304 aa). A helical membrane pass occupies residues 304–319; that stretch reads TFRILADLLGFAGPLC. Over 320-356 the chain is Extracellular; sequence IFGIVDHLGKENHVFQPKTQFLGVYFVSSQEFLGNAY. Residues 357 to 372 form a helical membrane-spanning segment; that stretch reads VLAVLLFLALLLQRTF. Topologically, residues 373–438 are cytoplasmic; that stretch reads LQASYYVAIE…MWFFFLCPNL (66 aa). The helical transmembrane segment at 439 to 454 threads the bilayer; it reads WTMPVQIIVGVILLYY. Over 455-460 the chain is Extracellular; that stretch reads ILGVSA. The helical transmembrane segment at 461–473 threads the bilayer; that stretch reads LIGAAVIILLAPV. The Cytoplasmic portion of the chain corresponds to 474–541; sequence QYFVATKLSQ…SLRAFAVYTS (68 aa). A helical transmembrane segment spans residues 542-557; sequence ISIFMNTAIPIAAVLI. Topologically, residues 558–576 are extracellular; sequence TFVGHVSFFKESDLSPSVA. A helical membrane pass occupies residues 577 to 592; that stretch reads FASLSLFHILVTPLFL. Over 593–1013 the chain is Cytoplasmic; it reads LSSVVRSTVK…YLSSAGILLL (421 aa). The region spanning 679 to 930 is the ABC transporter 1 domain; that stretch reads VQIIGGFFTW…ECQLFEHWKT (252 aa). Positions 688, 716, 720, and 721 each coordinate ATP. Serine 720 is a Mg(2+) binding site. Residues 741 to 766 form a disordered region; that stretch reads SNLPDSEGEDPSSPERETAAGSDIRS. Mg(2+) is bound at residue glutamine 775. Residues 939–950 show a composition bias toward basic and acidic residues; that stretch reads LEKETVMERKAS. The interval 939–962 is disordered; that stretch reads LEKETVMERKASEPSQGLPRAMSS. One can recognise an ABC transmembrane type-1 2 domain in the interval 1013-1307; that stretch reads LSLLVFSQLL…MVRNLADMEI (295 aa). The helical transmembrane segment at 1014 to 1031 threads the bilayer; that stretch reads SLLVFSQLLKHMVLVAID. At 1032–1067 the chain is on the extracellular side; sequence YWLAKWTDSALVLSPAARNCSLSQECDLDQSVYAMV. An N-linked (GlcNAc...) asparagine glycan is attached at asparagine 1050. The helical transmembrane segment at 1068 to 1084 threads the bilayer; the sequence is FTLLCSLGIVLCLVTSV. Topologically, residues 1085-1143 are cytoplasmic; that stretch reads TVEWTGLKVAKRLHRSLLNRIILAPMRFFETTPLGSILNRFSSDCNTIDQHIPSTLECL. Residues 1144–1161 traverse the membrane as a helical segment; it reads SRSTLLCVSALTVISYVT. Residue proline 1162 is a topological domain, extracellular. Residues 1163 to 1175 form a helical membrane-spanning segment; the sequence is VFLVALLPLAVVC. Residues 1176 to 1249 are Cytoplasmic-facing; that stretch reads YFIQKYFRVA…FLTAANRWLE (74 aa). A helical transmembrane segment spans residues 1250 to 1265; the sequence is VCMEYIGACVVLIAAA. The Extracellular segment spans residues 1266–1281; that stretch reads TSISNSLHRELSAGLV. The chain crosses the membrane as a helical span at residues 1282-1297; that stretch reads GLGLTYALMVSNYLNW. The Cytoplasmic segment spans residues 1298–1582; the sequence is MVRNLADMEI…VFASFVRADK (285 aa). The 235-residue stretch at 1345-1579 folds into the ABC transporter 2 domain; it reads IQIQNLSVRY…KDSVFASFVR (235 aa). ADP is bound by residues threonine 1381, glycine 1382, glycine 1384, lysine 1385, serine 1386, and serine 1387. Serine 1483 is an ATP binding site.

Belongs to the ABC transporter superfamily. ABCC family. Conjugate transporter (TC 3.A.1.208) subfamily. As to quaternary structure, forms an heterooctamer with KCNJ11; four ABCC8/SUR1 molecules interact with one KCNJ11 homotetramer.

The protein resides in the cell membrane. KATP channels are regulated by cytoplasmic ATP/ADP ratios; ATP inhibits the channel by closing the pore, while ADP activates the channel. Activated by phosphatidylinositol 4,5-biphosphate (PtdIns(4,5)P2). In terms of biological role, regulator subunit of pancreatic ATP-sensitive potassium channel (KATP), playing a major role in the regulation of insulin release. In pancreatic cells, it forms KATP channels with KCNJ11; KCNJ11 forms the channel pore while ABCC8 is required for activation and regulation. In Cricetus cricetus (Black-bellied hamster), this protein is ATP-binding cassette sub-family C member 8 (ABCC8).